The sequence spans 144 residues: uncharacterized protein (144 aa).

2 consecutive transmembrane segments (helical) span residues 10–30 (ILTR…GLGP) and 60–80 (YVFL…AIAV).

The protein resides in the membrane. This is an uncharacterized protein from Saccharomyces cerevisiae (strain ATCC 204508 / S288c) (Baker's yeast).